The sequence spans 253 residues: 2-dehydro-3-deoxy-D-gluconate 5-dehydrogenase (253 aa).

An NAD(+)-binding site is contributed by 14–38 (LITGCDTGLGQGMAVGLAEAGCDIV). Residue Ser145 coordinates substrate. Tyr158 serves as the catalytic Proton acceptor.

The protein belongs to the short-chain dehydrogenases/reductases (SDR) family.

It catalyses the reaction 2-dehydro-3-deoxy-D-gluconate + NAD(+) = 3-deoxy-D-glycero-2,5-hexodiulosonate + NADH + H(+). The protein operates within glycan metabolism; pectin degradation; 2-dehydro-3-deoxy-D-gluconate from pectin: step 5/5. In terms of biological role, catalyzes the reduction of 2,5-diketo-3-deoxygluconate (DKII or 4,6-dihydroxy-2,5-dioxohexanoate) into 2-keto-3-deoxygluconate (KDG or 2-dehydro-3-deoxygluconate) with a concomitant oxidation of NADH. In Dickeya dadantii (strain 3937) (Erwinia chrysanthemi (strain 3937)), this protein is 2-dehydro-3-deoxy-D-gluconate 5-dehydrogenase (kduD).